A 538-amino-acid polypeptide reads, in one-letter code: Dolichol kinase (538 aa).

The Lumenal portion of the chain corresponds to 1–13; that stretch reads MTRECPSPAPGPG. Residues 14–34 traverse the membrane as a helical segment; it reads APLSGSVLAEAAVVFAVVLSI. Residues 35–74 lie on the Cytoplasmic side of the membrane; it reads HATVWDRYSWCAVALAVQAFYVQYKWDRLLQQGSAVFQFR. The chain crosses the membrane as a helical span at residues 75–95; it reads MSANSGLLPASMVMPLLGLVM. Topologically, residues 96-111 are lumenal; it reads KERCQTAGNPFFERFG. A helical transmembrane segment spans residues 112–132; it reads IVVAATGMAVALFSSVLALGI. The Cytoplasmic segment spans residues 133–134; that stretch reads TR. A helical membrane pass occupies residues 135–155; sequence PVPTNTCVILGLAGGVIIYIM. Over 156 to 163 the chain is Lumenal; that stretch reads KHSLSVGE. A helical transmembrane segment spans residues 164 to 184; sequence VIEVLEVLLIFVYLNMILLYL. Residues 185–188 lie on the Cytoplasmic side of the membrane; the sequence is LPRC. The helical transmembrane segment at 189-209 threads the bilayer; the sequence is FTPGEALLVLGGISFVLNQLI. The Lumenal portion of the chain corresponds to 210-224; the sequence is KRSLTLVESQGDPVD. Residues 225–245 traverse the membrane as a helical segment; sequence FFLLVVVVGMVLMGIFFSTLF. Residues 246–254 lie on the Cytoplasmic side of the membrane; it reads VFMDSGTWA. The helical transmembrane segment at 255–275 threads the bilayer; that stretch reads SSIFFHLMTCVLSLGVVLPWL. Topologically, residues 276 to 297 are lumenal; it reads HRLIRRNPLLWLLQFLFQTDTR. A helical transmembrane segment spans residues 298 to 318; sequence IYLLAYWSLLATLACLVVLYQ. At 319 to 337 the chain is on the cytoplasmic side; that stretch reads NAKRSSSESKKHQAPTIAR. The chain crosses the membrane as a helical span at residues 338-354; it reads KYFHLIVVATYIPGIIF. Residues 355–359 lie on the Lumenal side of the membrane; sequence DRPLL. A helical transmembrane segment spans residues 360-380; the sequence is YVAATVCLAVFIFLEYVRYFR. The Cytoplasmic segment spans residues 381 to 401; the sequence is IKPLGHTLRSFLSLFLDERDS. Residues 402–422 traverse the membrane as a helical segment; sequence GPLILTHIYLLLGMSLPIWLI. Residues 423–436 are Lumenal-facing; that stretch reads PRPCTQKGSLGGAR. A helical transmembrane segment spans residues 437–457; sequence ALVPYAGVLAVGVGDTVASIF. Residues 458–472 are Cytoplasmic-facing; sequence GSTMGEIRWPGTKKT. The tract at residues 459 to 474 is CTP-binding; the sequence is STMGEIRWPGTKKTFE. Residues 473–493 traverse the membrane as a helical segment; the sequence is FEGTMTSIFAQIISVALILIF. Residues 494–495 lie on the Lumenal side of the membrane; sequence DS. The chain crosses the membrane as a helical span at residues 496–516; sequence GVDLNYSYAWILGSISTVSLL. Topologically, residues 517-538 are cytoplasmic; the sequence is EAYTTQIDNLLLPLYLLILLMA.

The protein belongs to the polyprenol kinase family. As to expression, ubiquitous.

It is found in the endoplasmic reticulum membrane. It catalyses the reaction a di-trans,poly-cis-dolichol + CTP = a di-trans,poly-cis-dolichyl phosphate + CDP + H(+). Its pathway is protein modification; protein glycosylation. Catalyzes CTP-mediated phosphorylation of dolichol, the terminal step in de novo dolichyl monophosphate (Dol-P) biosynthesis. Dol-P is a lipid carrier essential for the synthesis of N-linked and O-linked oligosaccharides and for GPI anchors. This chain is Dolichol kinase (DOLK), found in Homo sapiens (Human).